Consider the following 664-residue polypeptide: MRSKYFCSLALVLGLFFVSCDGFASNEVQALRRFKEAIYEDPLLVMSNWNDPNSDPCDWTGIYCSPSKDHVIKINISASSIKGFLAPELGQITYLQELILHGNILIGTIPKEIGNLKNLKILDLGNNHLMGPIPAEIGSLSGIMIINLQSNGLTGKLPAELGNLKYLRELHIDRNRLQGSLLVAGASGYQSKVYSSNSSANIAGLCKSLKVADFSYNFFVGNIPKCLENLPRTSFQGNCMQNKDLKHRSSSQCANAQLVKTHGSPSAAPKHQSAQMVAKHHRASKPKWLLALEIVTGSMVGLLLLVALFSAVHRWNNRSTLIIPWKKSSSEKEKFTVYVDSEMLKDVSRLTRQELEVACEDFSNIIGLSADSQIYKGTLKGGSEIAVISLCVKEEDWTGYLELYFQREVADLARLNHENTAKLLGYCKEISPFTRMLVFEYASNGTLYEHLHYGEAALVSWARRMKIVIGIARGLKYLHMELDPPFTISELSSNAIYLTEDFTPKLVDFECWKTILARSEKNLRNISSQGSICVLPNGMESRYLDVSGNIYAFGILLLEIVSGRPPYCKDKGFLIEWAKEFLEAPEAMSGLVDPELKHFNQEDLETVCEVASQCLNRDPTNNNNNHNKPSVQELCETLESRISLSISAELRSSSLAWAELALDS.

A signal peptide spans 1–22 (MRSKYFCSLALVLGLFFVSCDG). Residues 23-288 (FASNEVQALR…KHHRASKPKW (266 aa)) lie on the Extracellular side of the membrane. N-linked (GlcNAc...) asparagine glycosylation occurs at N75. LRR repeat units lie at residues 94-116 (YLQELILHGNILIGTIPKEIGNL), 118-140 (NLKILDLGNNHLMGPIPAEIGSL), 142-165 (GIMIINLQSNGLTGKLPAELGNLK), and 166-178 (YLRELHIDRNRLQ). Residue N197 is glycosylated (N-linked (GlcNAc...) asparagine). The chain crosses the membrane as a helical span at residues 289 to 309 (LLALEIVTGSMVGLLLLVALF). Residues 310–664 (SAVHRWNNRS…LAWAELALDS (355 aa)) are Cytoplasmic-facing. The region spanning 360–642 (EDFSNIIGLS…ELCETLESRI (283 aa)) is the Protein kinase domain.

This sequence belongs to the protein kinase superfamily. Ser/Thr protein kinase family.

It localises to the cell membrane. The enzyme catalyses L-seryl-[protein] + ATP = O-phospho-L-seryl-[protein] + ADP + H(+). It carries out the reaction L-threonyl-[protein] + ATP = O-phospho-L-threonyl-[protein] + ADP + H(+). This Arabidopsis thaliana (Mouse-ear cress) protein is Probable LRR receptor-like serine/threonine-protein kinase At1g63430.